A 168-amino-acid chain; its full sequence is uncharacterized protein (168 aa).

Residues 1–10 (MSPTTGPQPN) are compositionally biased toward pro residues. Disordered regions lie at residues 1–23 (MSPT…TGPQ) and 117–143 (EPGN…RGPQ).

This is an uncharacterized protein from Homo sapiens (Human).